The sequence spans 158 residues: SsrA-binding protein (158 aa).

This sequence belongs to the SmpB family.

It is found in the cytoplasm. Functionally, required for rescue of stalled ribosomes mediated by trans-translation. Binds to transfer-messenger RNA (tmRNA), required for stable association of tmRNA with ribosomes. tmRNA and SmpB together mimic tRNA shape, replacing the anticodon stem-loop with SmpB. tmRNA is encoded by the ssrA gene; the 2 termini fold to resemble tRNA(Ala) and it encodes a 'tag peptide', a short internal open reading frame. During trans-translation Ala-aminoacylated tmRNA acts like a tRNA, entering the A-site of stalled ribosomes, displacing the stalled mRNA. The ribosome then switches to translate the ORF on the tmRNA; the nascent peptide is terminated with the 'tag peptide' encoded by the tmRNA and targeted for degradation. The ribosome is freed to recommence translation, which seems to be the essential function of trans-translation. This Caldicellulosiruptor bescii (strain ATCC BAA-1888 / DSM 6725 / KCTC 15123 / Z-1320) (Anaerocellum thermophilum) protein is SsrA-binding protein.